Here is a 132-residue protein sequence, read N- to C-terminus: Large ribosomal subunit protein bL19 (132 aa).

This sequence belongs to the bacterial ribosomal protein bL19 family.

Functionally, this protein is located at the 30S-50S ribosomal subunit interface and may play a role in the structure and function of the aminoacyl-tRNA binding site. In Methylobacterium radiotolerans (strain ATCC 27329 / DSM 1819 / JCM 2831 / NBRC 15690 / NCIMB 10815 / 0-1), this protein is Large ribosomal subunit protein bL19.